Reading from the N-terminus, the 517-residue chain is 2-isopropylmalate synthase (517 aa).

One can recognise a Pyruvate carboxyltransferase domain in the interval 7-269 (VIIFDTTLRD…ETGIDTTQIV (263 aa)). The Mn(2+) site is built by Asp16, His204, His206, and Asn240. A required for the condensation reaction. Not required to bind substrate region spans residues 366-517 (LADKKREIFD…KPKAQGSGTI (152 aa)). The regulatory domain stretch occupies residues 395 to 517 (KFISQKISTE…KPKAQGSGTI (123 aa)).

It belongs to the alpha-IPM synthase/homocitrate synthase family. LeuA type 1 subfamily. In terms of assembly, homodimer. Remains a homodimer in the presence of L-leucine. It depends on Mn(2+) as a cofactor.

The protein localises to the cytoplasm. It carries out the reaction 3-methyl-2-oxobutanoate + acetyl-CoA + H2O = (2S)-2-isopropylmalate + CoA + H(+). It participates in amino-acid biosynthesis; L-leucine biosynthesis; L-leucine from 3-methyl-2-oxobutanoate: step 1/4. Inhibited by 3-bromo substituents and Leu, the pathway end product. Functionally, catalyzes the condensation of the acetyl group of acetyl-CoA with 3-methyl-2-oxobutanoate (2-ketoisovalerate) to form 3-carboxy-3-hydroxy-4-methylpentanoate (2-isopropylmalate). Complements an E.coli deletion. This is 2-isopropylmalate synthase from Neisseria meningitidis serogroup B (strain ATCC BAA-335 / MC58).